An 83-amino-acid polypeptide reads, in one-letter code: Small ribosomal subunit protein bS16 (83 aa).

Belongs to the bacterial ribosomal protein bS16 family.

In Shewanella putrefaciens (strain CN-32 / ATCC BAA-453), this protein is Small ribosomal subunit protein bS16.